A 62-amino-acid polypeptide reads, in one-letter code: Chromatin protein Cren7 1 (62 aa).

This sequence belongs to the Cren7 family. In terms of assembly, monomer. In terms of processing, methylated at multiple sites, to varying extents.

Its subcellular location is the chromosome. It localises to the cytoplasm. In terms of biological role, a chromatin protein, binds double-stranded DNA without sequence specificity. Constrains negative DNA supercoils. The sequence is that of Chromatin protein Cren7 1 (cren7-1) from Hyperthermus butylicus (strain DSM 5456 / JCM 9403 / PLM1-5).